The sequence spans 154 residues: Putative pre-16S rRNA nuclease (154 aa).

It belongs to the YqgF nuclease family.

It localises to the cytoplasm. Functionally, could be a nuclease involved in processing of the 5'-end of pre-16S rRNA. The protein is Putative pre-16S rRNA nuclease of Rickettsia felis (strain ATCC VR-1525 / URRWXCal2) (Rickettsia azadi).